The chain runs to 352 residues: Nicotinate-nucleotide--dimethylbenzimidazole phosphoribosyltransferase (352 aa).

Glu316 serves as the catalytic Proton acceptor.

It belongs to the CobT family.

It carries out the reaction 5,6-dimethylbenzimidazole + nicotinate beta-D-ribonucleotide = alpha-ribazole 5'-phosphate + nicotinate + H(+). Its pathway is nucleoside biosynthesis; alpha-ribazole biosynthesis; alpha-ribazole from 5,6-dimethylbenzimidazole: step 1/2. Its function is as follows. Catalyzes the synthesis of alpha-ribazole-5'-phosphate from nicotinate mononucleotide (NAMN) and 5,6-dimethylbenzimidazole (DMB). The sequence is that of Nicotinate-nucleotide--dimethylbenzimidazole phosphoribosyltransferase from Ruminiclostridium cellulolyticum (strain ATCC 35319 / DSM 5812 / JCM 6584 / H10) (Clostridium cellulolyticum).